A 311-amino-acid chain; its full sequence is Lipoyl synthase (311 aa).

7 residues coordinate [4Fe-4S] cluster: Cys-47, Cys-52, Cys-58, Cys-73, Cys-77, Cys-80, and Ser-286. Residues 59–276 enclose the Radical SAM core domain; sequence WSRHTATYLA…RSVGESLGLF (218 aa).

It belongs to the radical SAM superfamily. Lipoyl synthase family. [4Fe-4S] cluster is required as a cofactor.

It localises to the cytoplasm. It catalyses the reaction [[Fe-S] cluster scaffold protein carrying a second [4Fe-4S](2+) cluster] + N(6)-octanoyl-L-lysyl-[protein] + 2 oxidized [2Fe-2S]-[ferredoxin] + 2 S-adenosyl-L-methionine + 4 H(+) = [[Fe-S] cluster scaffold protein] + N(6)-[(R)-dihydrolipoyl]-L-lysyl-[protein] + 4 Fe(3+) + 2 hydrogen sulfide + 2 5'-deoxyadenosine + 2 L-methionine + 2 reduced [2Fe-2S]-[ferredoxin]. Its pathway is protein modification; protein lipoylation via endogenous pathway; protein N(6)-(lipoyl)lysine from octanoyl-[acyl-carrier-protein]: step 2/2. In terms of biological role, catalyzes the radical-mediated insertion of two sulfur atoms into the C-6 and C-8 positions of the octanoyl moiety bound to the lipoyl domains of lipoate-dependent enzymes, thereby converting the octanoylated domains into lipoylated derivatives. The sequence is that of Lipoyl synthase from Chlamydia trachomatis serovar D (strain ATCC VR-885 / DSM 19411 / UW-3/Cx).